Consider the following 900-residue polypeptide: Chromodomain-helicase-DNA-binding protein 1-like (900 aa).

A Helicase ATP-binding domain is found at 52-217 (VQCFHCQNGC…YSLLCVVEPD (166 aa)). Residue 65 to 72 (DEMGLGKT) participates in ATP binding. The short motif at 168-171 (DEAH) is the DEAH box element. Residues 345–507 (LLDRLLAFLY…QKPSAEADFQ (163 aa)) enclose the Helicase C-terminal domain. Serine 534 bears the Phosphoserine mark. The interval 546–569 (PDALPAAAAAGGGSLEPEEGSELE) is disordered. Positions 606–640 (TLLEKTSHGGRTLRNKGSVLIPGLAEGPIKRKKIL) are regulatory linker segment (RLS). 3 positions are modified to phosphoserine: serine 612, serine 623, and serine 641. Residues 620 to 678 (NKGSVLIPGLAEGPIKRKKILSPEELEDRRKKRQEAAAKRKRLMEEKRKEKEEAEHRKK) are required for ATPase activity. Residues 641–673 (SPEELEDRRKKRQEAAAKRKRLMEEKRKEKEEA) are disordered. Residues 643–680 (EELEDRRKKRQEAAAKRKRLMEEKRKEKEEAEHRKKMA) adopt a coiled-coil conformation. Positions 653–673 (QEAAAKRKRLMEEKRKEKEEA) are enriched in basic and acidic residues. In terms of domain architecture, Macro spans 709-900 (SAELAYEDLD…ASSSSAPLVP (192 aa)). Residue serine 894 is modified to Phosphoserine.

This sequence belongs to the SNF2/RAD54 helicase family. In terms of assembly, interacts with nucleosomes; interacts with the acidic patch of histones. Interacts (via macro domain) with PARP1; interacts only when PARP1 is poly-ADP-ribosylated (PARylated). Interacts with CIAO1.

It is found in the nucleus. The protein localises to the chromosome. It carries out the reaction ATP + H2O = ADP + phosphate + H(+). With respect to regulation, adopts an inactive conformation in absence of DNA damage. Binding to poly-ADP-ribosylated histones activates the ATP-dependent chromatin remodeler activity. Functionally, ATP-dependent chromatin remodeler that mediates chromatin-remodeling following DNA damage. Recruited to DNA damage sites through interaction with poly-ADP-ribose: specifically recognizes and binds histones that are poly-ADP-ribosylated on serine residues in response to DNA damage. Poly-ADP-ribose-binding activates the ATP-dependent chromatin remodeler activity, thereby regulating chromatin during DNA repair. Catalyzes nucleosome sliding away from DNA breaks in an ATP-dependent manner. Chromatin remodeling activity promotes PARP2 removal from chromatin. This is Chromodomain-helicase-DNA-binding protein 1-like (Chd1l) from Mus musculus (Mouse).